The primary structure comprises 2274 residues: Nucleolar pre-ribosomal-associated protein 1 (2274 aa).

The segment at Met-1–Lys-23 is disordered. Residues Glu-10 to Gly-20 are compositionally biased toward low complexity. 2 positions are modified to phosphoserine: Ser-17 and Ser-1141. Residues Val-2020–Ala-2042 are disordered.

Its subcellular location is the nucleus. The protein resides in the nucleolus. The chain is Nucleolar pre-ribosomal-associated protein 1 (Urb1) from Mus musculus (Mouse).